We begin with the raw amino-acid sequence, 1310 residues long: Adhesion G protein-coupled receptor A3 (1310 aa).

An N-terminal signal peptide occupies residues 1 to 27 (MEPPPPLLLLPLALLALLWGGERGAAA). The LRRNT domain maps to 28–70 (LPAGCKHDGRARGTGRAAAAAEGKVVCSSLELAQVLPPDTLPN). The Extracellular segment spans residues 28–747 (LPAGCKHDGR…TELYTPAASL (720 aa)). N-linked (GlcNAc...) asparagine glycosylation is found at asparagine 70 and asparagine 87. LRR repeat units lie at residues 71–92 (RTVT…SFSG), 95–116 (LLER…AFWG), 119–140 (SLKR…VFRG), and 143–164 (NLVR…TFDY). 10 N-linked (GlcNAc...) asparagine glycosylation sites follow: asparagine 148, asparagine 195, asparagine 290, asparagine 321, asparagine 422, asparagine 442, asparagine 581, asparagine 641, asparagine 676, and asparagine 717. The region spanning 176 to 226 (EYLLCDCNILWMHRWVKERNITVRDTRCVYPKSLQAQPVTGVKQELLTCDP) is the LRRCT domain. The Ig-like domain maps to 231–329 (PSFYMTPSHR…GNNTRTVDIV (99 aa)). The cysteines at positions 253 and 313 are disulfide-linked. Positions 572-739 (LDKQLSFKCN…AVLMDLTGTE (168 aa)) constitute a GAIN-B domain. The GPS stretch occupies residues 690 to 739 (AAQWDFDLLNGQGGWKSDGCCILYSDENITTIQCGSLGNYAVLMDLTGTE). Cysteine 709 and cysteine 723 are oxidised to a cystine. A helical membrane pass occupies residues 748 to 768 (LHPVVYTTAITLLLCLLAVII). Topologically, residues 769–785 (SYMYHHSLIRISLKSWH) are cytoplasmic. The chain crosses the membrane as a helical span at residues 786-806 (MLVNLCFHILLTCVVFVGGIT). Residues 807–815 (QTRNASVCQ) are Extracellular-facing. Asparagine 810 carries an N-linked (GlcNAc...) asparagine glycan. Residues 816–836 (AVGIILHYSTLATVLWVGVTA) traverse the membrane as a helical segment. The Cytoplasmic segment spans residues 837–865 (RNIYKQVTKKAKRCQDPDEPPAPPRPMLR). A helical membrane pass occupies residues 866–886 (FYLIGGGIPIIVCGITAAANI). At 887–908 (KNYGSRPSAPYCWMAWEPSLGA) the chain is on the extracellular side. The helical transmembrane segment at 909 to 929 (FYGPASFITFVNCMYFLSIFI) threads the bilayer. The Cytoplasmic portion of the chain corresponds to 930 to 985 (QLKRHPERKYELKEPTEEQQRLAANENGEINHQDSMSLSLISTSTLENEHSFQSQL). Residues 986–1006 (LGASLTLLLYVILWMFGAMAV) traverse the membrane as a helical segment. The Extracellular portion of the chain corresponds to 1007–1013 (SLYYPLD). A helical transmembrane segment spans residues 1014–1034 (LVFSFFFGATCLSFSAFMMVH). The Cytoplasmic portion of the chain corresponds to 1035-1310 (HCINREDVRL…TGLWKHETTV (276 aa)). Disordered stretches follow at residues 1065-1084 (PPNS…SSAE), 1187-1208 (VEGS…GHSR), and 1221-1264 (YNPP…ADLE). Positions 1222 to 1239 (NPPQQDSSDACSTLPKSS) are enriched in polar residues. The short motif at 1308–1310 (TTV) is the PDZ-binding element.

Belongs to the G-protein coupled receptor 2 family. Adhesion G-protein coupled receptor (ADGR) subfamily. Interacts (via PDZ-binding motif) with DLG1. As to expression, expressed by spermatogonial progenitor cells located within the outer cell layer of the seminiferous tubule and by multipotent adult spermatogonial-derived stem cells.

It localises to the membrane. Orphan receptor that may have a role in planar cell polarity pathway. This chain is Adhesion G protein-coupled receptor A3 (Adgra3), found in Mus musculus (Mouse).